Reading from the N-terminus, the 140-residue chain is Con-Ins Im2 (140 aa).

An N-terminal signal peptide occupies residues 1-29; the sequence is MALTWPSSPPVLLTLLLSLLALQLCAVYG. 4 disulfide bridges follow: Cys-35-Cys-123, Cys-50-Cys-126, Cys-62-Cys-139, and Cys-125-Cys-130. The propeptide at 64 to 110 is c peptide; the sequence is PRGYVSNWFTKRSAPNKPAETFVDQNLRGVLLNKREALSYLRPREPR. Glu-134 carries the 4-carboxyglutamate; partial modification.

It belongs to the insulin family. Heterodimer of A and B chains; disulfide-linked. As to expression, expressed by the venom gland.

Its subcellular location is the secreted. Its function is as follows. This venom insulin facilitates prey capture by rapidly inducing hypoglycemic shock. Intraperitoneal injection of this peptide into zebrafish lowers blood glucose with the same potency than human insulin. In vivo, when applied to water, this peptide reduces overall locomotor activity of zebrafish larvae, observed as a significant decrease in the percentage of time spent swimming and movement frequency. This Conus imperialis (Imperial cone) protein is Con-Ins Im2.